A 338-amino-acid chain; its full sequence is MADKKIKIGINGFGRIGRLVARVILQRNDVELVAVNDPFITTEYMTYMFKYDSVHGQWKHNELKVKDEKTLLFGEKPVTVFGIRNPEDIPWGEAGADFVVESTGVFTDKDKAAAHLKGGAKKVVISAPSKDAPMFVVGVNEHEYKSDLNIVSNASCTTNCLAPLAKVINDRFGIVEGLMTTVHSITATQKTVDGPSMKDWRGGRAASFNIIPSSTGAAKAVGKVLPQLNGKLTGMSFRVPTVDVSVVDLTVRLEKAATYDEIKKAIKEESQGKLKGILGYTEDDVVSTDFVGDNRSSIFDAKAGIALSDNFVKLVSWYDNEWGYSTRVVDLIIHMSKA.

The interval 2 to 153 (ADKKIKIGIN…YKSDLNIVSN (152 aa)) is binding to NAD. NAD(+)-binding positions include 15-16 (RI) and aspartate 37. Residues 56–75 (GQWKHNELKVKDEKTLLFGE) are external loop. Arginine 84 lines the NAD(+) pocket. The catalytic stretch occupies residues 154–338 (ASCTTNCLAP…VDLIIHMSKA (185 aa)). 155–157 (SCT) is a D-glyceraldehyde 3-phosphate binding site. Cysteine 156 acts as the Nucleophile in catalysis. 2 positions are modified to S-nitrosocysteine: cysteine 156 and cysteine 160. An S-loop region spans residues 183–206 (HSITATQKTVDGPSMKDWRGGRAA). D-glyceraldehyde 3-phosphate contacts are provided by residues threonine 186, 215–216 (TG), and arginine 238. Asparagine 320 contacts NAD(+).

This sequence belongs to the glyceraldehyde-3-phosphate dehydrogenase family. As to quaternary structure, homotetramer.

The protein localises to the cytoplasm. The enzyme catalyses D-glyceraldehyde 3-phosphate + phosphate + NAD(+) = (2R)-3-phospho-glyceroyl phosphate + NADH + H(+). It participates in carbohydrate degradation; glycolysis; pyruvate from D-glyceraldehyde 3-phosphate: step 1/5. Functionally, key enzyme in glycolysis that catalyzes the first step of the pathway by converting D-glyceraldehyde 3-phosphate (G3P) into 3-phospho-D-glyceroyl phosphate. Essential for the maintenance of cellular ATP levels and carbohydrate metabolism. This is Glyceraldehyde-3-phosphate dehydrogenase, cytosolic (GAPC) from Sinapis alba (White mustard).